Consider the following 227-residue polypeptide: MALEALTSPRLASPIPPLFEDSSVFHGVEHWTKGKRSKRSRSDFHHQNLTEEEYLAFCLMLLARDNRQPPPPPAVEKLSYKCSVCDKTFSSYQALGGHKASHRKNLSQTLSGGGDDHSTSSATTTSAVTTGSGKSHVCTICNKSFPSGQALGGHKRCHYEGNNNINTSSVSNSEGAGSTSHVSSSHRGFDLNIPPIPEFSMVNGDDEVMSPMPAKKPRFDFPVKLQL.

The C2H2-type 1 zinc-finger motif lies at 80 to 102 (YKCSVCDKTFSSYQALGGHKASH). Residues 96 to 128 (GGHKASHRKNLSQTLSGGGDDHSTSSATTTSAV) are disordered. A compositionally biased stretch (low complexity) spans 119–128 (TSSATTTSAV). The segment at 136–158 (HVCTICNKSFPSGQALGGHKRCH) adopts a C2H2-type 2 zinc-finger fold. The segment at 168 to 189 (SSVSNSEGAGSTSHVSSSHRGF) is disordered. A compositionally biased stretch (polar residues) spans 174-186 (EGAGSTSHVSSSH).

As to expression, expressed in roots, stems and leaves.

Its subcellular location is the nucleus. Transcriptional repressor involved in abiotic stress responses. Can repress the stress responsive genes DREB1A and LTI78. Probably involved in jasmonate (JA) early signaling response. May regulate the expression of the JA biosynthesis gene LOX3 and control the expression of TIFY10A/JAZ1, a key repressor in the JA signaling cascade. This chain is Zinc finger protein ZAT10 (ZAT10), found in Arabidopsis thaliana (Mouse-ear cress).